Reading from the N-terminus, the 127-residue chain is Holo-[acyl-carrier-protein] synthase (127 aa).

Mg(2+) is bound by residues D7 and E56.

This sequence belongs to the P-Pant transferase superfamily. AcpS family. Mg(2+) serves as cofactor.

The protein resides in the cytoplasm. It catalyses the reaction apo-[ACP] + CoA = holo-[ACP] + adenosine 3',5'-bisphosphate + H(+). Functionally, transfers the 4'-phosphopantetheine moiety from coenzyme A to a Ser of acyl-carrier-protein. This Leptospira biflexa serovar Patoc (strain Patoc 1 / Ames) protein is Holo-[acyl-carrier-protein] synthase.